The chain runs to 1029 residues: MQYTQLQTLTNYSFLKSASHPQELVEEAKILGYHALAITDECSLAGIVKAHVAAKELNLKLLVGSYFELTNGFKIIAIAPNRQAYAELSGFISLARRRASKGEYEAHLSDLRFRLQQCLIIWLPYFNNHISDVDVTTLATAFKQRLWIGVSHTLIAAEQRLFSHLNKLANALHVPLVASGLTYMHNKNCKPLLDILTAIRENTPIQQLGTRLHSNAEVNLKPLHELNQLYPEALIQQTQVIAQLCNFSLDELRYQYPKELVPSNTTPIAHLKKLVKEGEAKRWPQGTPEHAQKIIAMELGLIEEMQYEYYFLTVHDIVHFARSKNILCQGRGSAANSVVCYCLFITEIAPGQINVLFERFISKERNEPPDIDVDFEHQRREEVIQYIYQKYGRERAALAATVITYRSRSAIRDVGKAMGLEAGLVGQLAKSLAWWDRTGDLIKRMESFGLNPETQKTMQHFFALVQQILGFPRHLSQHVGGFIITQDKVSDLVPLENASMPDRTIIQWDKYDIEAMGLLKVDVLALGMLTALRKSLETVSQYDAAVYSLATIPREDPATYAMLSKGDSIGVFQVESRAQMSMLPRLRPKCFYDLVIEIAIVRPGPIQGDMVHPYLRRRDGIEEVHYQNDKIKSVLEPTLGIPIFQEQAIRLAMVAADFSGGEADQLRRAMASWGKNGSLLKFEDKFIQGMLNNGYPLDFAHRLFEQIKGFGGYGFPESHSASFALLCYASSWLKCHHPAAFYCALLNSQPMGFYSASQLIQDARRHKVVVLPVEVNASGYESHVVLTNHNTSAPPNIIQLGLHMIKGLSILTAERIVLAKGDKPFTTLKELSLRAQLSSADLQLLASADALHKLTGNRHNSRWQAAALMPHSPLLDGAELEEDALNTPAPSIEKNIQTDFNSTGLSLRLHPMALLRAQQPFNRCKKQSELASIHNGGFAQVAGLVTGRQRPGTAKGTLFLTLEDETGNINIVVWTSTQERCRQALLTAKLLLVKGRLETKDNVTHIIAGQMFDYSHMLSEFDIKSRDFH.

The protein belongs to the DNA polymerase type-C family. DnaE2 subfamily.

Its subcellular location is the cytoplasm. It catalyses the reaction DNA(n) + a 2'-deoxyribonucleoside 5'-triphosphate = DNA(n+1) + diphosphate. Functionally, DNA polymerase involved in damage-induced mutagenesis and translesion synthesis (TLS). It is not the major replicative DNA polymerase. This is Error-prone DNA polymerase from Saccharophagus degradans (strain 2-40 / ATCC 43961 / DSM 17024).